The sequence spans 288 residues: MGLFDRKEKYIRINPNRYVRNGVDHPVPEVPDDLFAKCPGCKQAIYQKDLGQAKICPNCSYTFRISAKERLDLTVDEGSFQELFTGIKTENPLNFPGYMEKLAATKEKTGLDEAVVTGVATIKGQKTALAIMDSNFIMASMGTVVGEKITKLFEYAILEKLPVVIFTASGGARMQEGIMSLMQMAKISAAVKCHSNAGLLYLTVLTDPTTGGVTASFAMQGDIILAEPQTLIGFAGRRVIENTVRETLPDDFQKAEFLQEHGFVDAIVKRTELADTIATLLSFHGGVQ.

One can recognise a CoA carboxyltransferase N-terminal domain in the interval Leu34–Gln288. Positions 38, 41, 56, and 59 each coordinate Zn(2+). A C4-type zinc finger spans residues Cys38–Cys59.

The protein belongs to the AccD/PCCB family. Acetyl-CoA carboxylase is a heterohexamer composed of biotin carboxyl carrier protein (AccB), biotin carboxylase (AccC) and two subunits each of ACCase subunit alpha (AccA) and ACCase subunit beta (AccD). It depends on Zn(2+) as a cofactor.

The protein localises to the cytoplasm. The catalysed reaction is N(6)-carboxybiotinyl-L-lysyl-[protein] + acetyl-CoA = N(6)-biotinyl-L-lysyl-[protein] + malonyl-CoA. It functions in the pathway lipid metabolism; malonyl-CoA biosynthesis; malonyl-CoA from acetyl-CoA: step 1/1. In terms of biological role, component of the acetyl coenzyme A carboxylase (ACC) complex. Biotin carboxylase (BC) catalyzes the carboxylation of biotin on its carrier protein (BCCP) and then the CO(2) group is transferred by the transcarboxylase to acetyl-CoA to form malonyl-CoA. The chain is Acetyl-coenzyme A carboxylase carboxyl transferase subunit beta from Streptococcus thermophilus (strain ATCC BAA-491 / LMD-9).